A 316-amino-acid chain; its full sequence is tRNA dimethylallyltransferase (316 aa).

Glycine 15–serine 22 provides a ligand contact to ATP. Threonine 17–serine 22 contributes to the substrate binding site. An interaction with substrate tRNA region spans residues aspartate 40–glutamine 43.

The protein belongs to the IPP transferase family. In terms of assembly, monomer. It depends on Mg(2+) as a cofactor.

The enzyme catalyses adenosine(37) in tRNA + dimethylallyl diphosphate = N(6)-dimethylallyladenosine(37) in tRNA + diphosphate. In terms of biological role, catalyzes the transfer of a dimethylallyl group onto the adenine at position 37 in tRNAs that read codons beginning with uridine, leading to the formation of N6-(dimethylallyl)adenosine (i(6)A). This chain is tRNA dimethylallyltransferase, found in Chlorobium limicola (strain DSM 245 / NBRC 103803 / 6330).